We begin with the raw amino-acid sequence, 861 residues long: Probable beta-glucosidase A (861 aa).

The N-terminal stretch at 1–19 is a signal peptide; it reads MKLGWIEVAALAAASVVSA. Residues N62, N212, and N253 are each glycosylated (N-linked (GlcNAc...) asparagine). D281 is a catalytic residue. N-linked (GlcNAc...) asparagine glycans are attached at residues N316, N323, N355, N443, N524, N543, N565, N669, N713, and N846.

This sequence belongs to the glycosyl hydrolase 3 family.

The protein resides in the secreted. It catalyses the reaction Hydrolysis of terminal, non-reducing beta-D-glucosyl residues with release of beta-D-glucose.. It functions in the pathway glycan metabolism; cellulose degradation. In terms of biological role, beta-glucosidases are one of a number of cellulolytic enzymes involved in the degradation of cellulosic biomass. Catalyzes the last step releasing glucose from the inhibitory cellobiose. The protein is Probable beta-glucosidase A (bglA) of Aspergillus flavus (strain ATCC 200026 / FGSC A1120 / IAM 13836 / NRRL 3357 / JCM 12722 / SRRC 167).